A 342-amino-acid chain; its full sequence is Growth hormone-regulated TBC protein 1 (342 aa).

Positions 72 to 263 constitute a Rab-GAP TBC domain; the sequence is GIPNEHRSHV…RIWDCLFFEG (192 aa).

May act as a GTPase-activating protein for Rab family protein(s). The chain is Growth hormone-regulated TBC protein 1 (grtp1) from Xenopus tropicalis (Western clawed frog).